We begin with the raw amino-acid sequence, 165 residues long: MALRIWASSTAKALRLSSASRPHFSPLFRCFSSAAVLDGLKYANSHEWVKHEGSVATIGITDHAQDHLGEVVFVELPEVGGSVTKATGFGAVESVKATSDVNSPISGEIVEVNSKLTKTPGLINKSPYEDGWMIKVKPSNPSELDSLMGPKEYTKFCEEEGAAAH.

The N-terminal 31 residues, 1-31 (MALRIWASSTAKALRLSSASRPHFSPLFRCF), are a transit peptide targeting the mitochondrion. Positions 55-137 (VATIGITDHA…YEDGWMIKVK (83 aa)) constitute a Lipoyl-binding domain. Lys-96 bears the N6-lipoyllysine mark.

The protein belongs to the GcvH family. The glycine cleavage system is composed of four components that only loosely associate: the P protein (EC 1.4.4.2), the T protein (EC 2.1.2.10), the L protein (EC 1.8.1.4) and the lipoyl-bearing H protein. Requires (R)-lipoate as cofactor. In terms of tissue distribution, expressed in roots, stems and leaves.

The protein localises to the mitochondrion. The glycine cleavage system catalyzes the degradation of glycine. The H protein shuttles the methylamine group of glycine from the P protein to the T protein. This chain is Glycine cleavage system H protein, mitochondrial (GDCSH), found in Flaveria trinervia (Clustered yellowtops).